Here is a 138-residue protein sequence, read N- to C-terminus: MLLYSISKAAEKTSISSYTLRYYEKIGLLPPPKRKNSGRRFYTETDIQFMLFLKSLKETGMSLEDINEFVKDGCILEKINSDVKSAQLSPSINKRIEILTKHLEKMEIKKRELEEVISTTKGKLDTYYSILKEEVENK.

The 70-residue stretch at Leu-3–Asp-72 folds into the HTH merR-type domain. Positions Ile-6–Lys-25 form a DNA-binding region, H-T-H motif.

This is an uncharacterized protein from Bacillus subtilis (strain 168).